The sequence spans 332 residues: Divalent cation transporter CmaX (332 aa).

Residues methionine 1 to isoleucine 277 lie on the Cytoplasmic side of the membrane. Residues isoleucine 278–serine 286 form a helical membrane-spanning segment. Residues phenylalanine 287–glycine 307 lie on the Periplasmic side of the membrane. Residues phenylalanine 308–tryptophan 323 traverse the membrane as a helical segment. At tryptophan 324–leucine 332 the chain is on the cytoplasmic side.

It belongs to the CorA metal ion transporter (MIT) (TC 1.A.35) family. In terms of assembly, homopentamer.

Its subcellular location is the cell inner membrane. It carries out the reaction Zn(2+)(in) = Zn(2+)(out). It catalyses the reaction Cd(2+)(in) = Cd(2+)(out). The catalysed reaction is Ni(2+)(in) = Ni(2+)(out). The enzyme catalyses Co(2+)(in) = Co(2+)(out). Functionally, transports divalent cations including Zn(2+), Cd(2+), Ni(2+) and Co(2+). The proton gradient has a small influence on transport suggesting that the transport is probably not proton-dependent. This chain is Divalent cation transporter CmaX, found in Pseudomonas aeruginosa (strain ATCC 15692 / DSM 22644 / CIP 104116 / JCM 14847 / LMG 12228 / 1C / PRS 101 / PAO1).